The following is a 226-amino-acid chain: Elongation factor G (226 aa).

Belongs to the GTP-binding elongation factor family. EF-G/EF-2 subfamily.

It localises to the cytoplasm. Its function is as follows. Catalyzes the GTP-dependent ribosomal translocation step during translation elongation. During this step, the ribosome changes from the pre-translocational (PRE) to the post-translocational (POST) state as the newly formed A-site-bound peptidyl-tRNA and P-site-bound deacylated tRNA move to the P and E sites, respectively. Catalyzes the coordinated movement of the two tRNA molecules, the mRNA and conformational changes in the ribosome. The polypeptide is Elongation factor G (fusA) (Neisseria gonorrhoeae).